The primary structure comprises 1462 residues: DNA polymerase alpha catalytic subunit (1462 aa).

Disordered regions lie at residues 1-33 (MAPV…GRQE) and 98-123 (DLED…KRNV). Residues 20–29 (RARREKKSKK) are compositionally biased toward basic residues. Residues 106–116 (ADEKGKDGKAR) show a composition bias toward basic and acidic residues. Thr-174 carries the phosphothreonine modification. Residues Ser-186, Ser-190, and Ser-209 each carry the phosphoserine modification. Lys-224 is subject to N6-acetyllysine. The segment at 232–251 (DVQVESTEEEQESGAMEFED) is disordered. Thr-406 carries the post-translational modification Phosphothreonine. The tract at residues 650–715 (RINVCKAPHW…YHLSELVQQI (66 aa)) is DNA-binding. Lys-970 carries the N6-succinyllysine modification. The tract at residues 1245 to 1376 (QFRVHHYHKD…TGPLCPACMK (132 aa)) is DNA-binding. Zn(2+) is bound by residues Cys-1283, Cys-1286, Cys-1310, Cys-1315, Cys-1348, Cys-1353, Cys-1371, and Cys-1374. The segment at 1283–1318 (CPTCGTENIYDNVFDGSGTDMEPSLYRCSNIDCKAS) adopts a CysA-type zinc-finger fold. The CysB motif motif lies at 1348 to 1374 (CEEPTCRNRTRHLPLQFSRTGPLCPAC).

It belongs to the DNA polymerase type-B family. As to quaternary structure, component of the alpha DNA polymerase complex (also known as the alpha DNA polymerase-primase complex) consisting of four subunits: the catalytic subunit POLA1, the regulatory subunit POLA2, and the primase complex subunits PRIM1 and PRIM2 respectively. Interacts with PARP1; this interaction functions as part of the control of replication fork progression. Interacts with MCM10 and WDHD1; these interactions recruit the polymerase alpha complex to the pre-replicative complex bound to DNA. Interacts with RPA1; this interaction stabilizes the replicative complex and reduces the misincorporation rate of DNA polymerase alpha by acting as a fidelity clamp. (Microbial infection) Interacts with SV40 Large T antigen; this interaction allows viral DNA replication. In terms of assembly, (Microbial infection) Interacts with herpes simplex virus 1/HHV-1 replication origin-binding protein UL9. In terms of processing, a 165 kDa form is probably produced by proteolytic cleavage at Lys-124.

The protein resides in the nucleus. It is found in the cytoplasm. The protein localises to the cytosol. It carries out the reaction DNA(n) + a 2'-deoxyribonucleoside 5'-triphosphate = DNA(n+1) + diphosphate. Autoinhibited in apo-primosome, where the zinc motif of POLA1 and oligonucleotide/olicosaccharide-binding domain of POLA2 are placed into the active site blocking RNA:DNA duplex entry. Catalytic subunit of the DNA polymerase alpha complex (also known as the alpha DNA polymerase-primase complex) which plays an essential role in the initiation of DNA synthesis. During the S phase of the cell cycle, the DNA polymerase alpha complex (composed of a catalytic subunit POLA1, a regulatory subunit POLA2 and two primase subunits PRIM1 and PRIM2) is recruited to DNA at the replicative forks via direct interactions with MCM10 and WDHD1. The primase subunit of the polymerase alpha complex initiates DNA synthesis by oligomerising short RNA primers on both leading and lagging strands. These primers are initially extended by the polymerase alpha catalytic subunit and subsequently transferred to polymerase delta and polymerase epsilon for processive synthesis on the lagging and leading strand, respectively. The reason this transfer occurs is because the polymerase alpha has limited processivity and lacks intrinsic 3' exonuclease activity for proofreading error, and therefore is not well suited for replicating long complexes. In the cytosol, responsible for a substantial proportion of the physiological concentration of cytosolic RNA:DNA hybrids, which are necessary to prevent spontaneous activation of type I interferon responses. This Homo sapiens (Human) protein is DNA polymerase alpha catalytic subunit (POLA1).